A 658-amino-acid chain; its full sequence is Threonine--tRNA ligase (658 aa).

In terms of domain architecture, TGS spans Met1–Thr64. Residues Asp246–Pro549 are catalytic. Zn(2+) contacts are provided by Cys343, His394, and His526.

The protein belongs to the class-II aminoacyl-tRNA synthetase family. As to quaternary structure, homodimer. Zn(2+) serves as cofactor.

It is found in the cytoplasm. The catalysed reaction is tRNA(Thr) + L-threonine + ATP = L-threonyl-tRNA(Thr) + AMP + diphosphate + H(+). Its function is as follows. Catalyzes the attachment of threonine to tRNA(Thr) in a two-step reaction: L-threonine is first activated by ATP to form Thr-AMP and then transferred to the acceptor end of tRNA(Thr). Also edits incorrectly charged L-seryl-tRNA(Thr). The polypeptide is Threonine--tRNA ligase (Bartonella quintana (strain Toulouse) (Rochalimaea quintana)).